The primary structure comprises 146 residues: P antigen family member 1 (146 aa).

The interval 16-146 (YVESSEESSD…PEEDEGQSQP (131 aa)) is disordered. Positions 19–32 (SSEESSDEQPDEVE) are enriched in acidic residues. Ser63 is subject to Phosphoserine. Residues 79–92 (PDTKRVCLRNEEQM) are compositionally biased toward basic and acidic residues. Phosphoserine is present on Ser105. Over residues 107 to 120 (EQVHPKTGCERGDG) the composition is skewed to basic and acidic residues. Phosphoserine is present on Ser144.

It belongs to the GAGE family. As to expression, isolated from prostate cancer cell lines; expression associated with progression to androgen insensitive phenotype. Expressed in normal testis and at lower level in normal placenta.

The sequence is that of P antigen family member 1 (PAGE1) from Homo sapiens (Human).